The sequence spans 298 residues: Mitochondrial distribution and morphology protein 12 (298 aa).

The SMP-LTD domain maps to 1-298 (MSIELDWTGL…VYPHFYTLYL (298 aa)). A disordered region spans residues 118–142 (SEHEESLSRWSDTESETGTCDSSSL). A compositionally biased stretch (polar residues) spans 133-142 (ETGTCDSSSL).

Belongs to the MDM12 family. Component of the ER-mitochondria encounter structure (ERMES) or MDM complex, composed of MMM1, MDM10, MDM12 and MDM34. An MMM1 homodimer associates with one molecule of MDM12 on each side in a pairwise head-to-tail manner, and the SMP-LTD domains of MMM1 and MDM12 generate a continuous hydrophobic tunnel for phospholipid trafficking.

The protein resides in the mitochondrion outer membrane. It is found in the endoplasmic reticulum membrane. Its function is as follows. Component of the ERMES/MDM complex, which serves as a molecular tether to connect the endoplasmic reticulum (ER) and mitochondria. Components of this complex are involved in the control of mitochondrial shape and protein biogenesis, and function in nonvesicular lipid trafficking between the ER and mitochondria. MDM12 is required for the interaction of the ER-resident membrane protein MMM1 and the outer mitochondrial membrane-resident beta-barrel protein MDM10. The MDM12-MMM1 subcomplex functions in the major beta-barrel assembly pathway that is responsible for biogenesis of all mitochondrial outer membrane beta-barrel proteins, and acts in a late step after the SAM complex. The MDM10-MDM12-MMM1 subcomplex further acts in the TOM40-specific pathway after the action of the MDM12-MMM1 complex. Essential for establishing and maintaining the structure of mitochondria and maintenance of mtDNA nucleoids. The protein is Mitochondrial distribution and morphology protein 12 of Malassezia globosa (strain ATCC MYA-4612 / CBS 7966) (Dandruff-associated fungus).